The following is a 713-amino-acid chain: F-box/WD repeat-containing protein 7 (713 aa).

A disordered region spans residues 1–150; the sequence is MNQELLSVGS…DEHTHNSNVT (150 aa). Serine 26 carries the phosphoserine modification. The span at 46–55 shows a compositional bias: basic and acidic residues; that stretch reads RHQEEEHTAR. A compositionally biased stretch (polar residues) spans 69-84; that stretch reads QNDSQQGQVEENNNRF. Acidic residues predominate over residues 87-135; the sequence is VDEDSSGNQEEQEEDEEHAGEQEEEEEEEEEEEEEEEMDQESDDFDQSD. Residues 94–136 are a coiled coil; the sequence is NQEEQEEDEEHAGEQEEEEEEEEEEEEEEEMDQESDDFDQSDD. The segment covering 136–145 has biased composition (basic and acidic residues); the sequence is DSSREDEHTH. A Phosphothreonine modification is found at threonine 211. At serine 233 the chain carries Phosphoserine. The F-box domain maps to 284–330; the sequence is RDFISLLPKELALYVLSFLEPKDLLQAAQTCRYWRILAEDNLLWREK. WD repeat units lie at residues 384-424, 426-462, 465-504, 506-542, 545-584, 586-624, and 628-665; these read GHDD…RTLV, HTGG…CIHT, GHTS…HVLM, HVAA…CLHT, GHTN…HTLT, HQSL…QTLQ, and KHQS…FIRN.

In terms of assembly, homodimer; homodimerization plays a role in substrate binding and/or ubiquitination and degradation. Component of the SCF(FBXW7) complex consisting of CUL1, RBX1, SKP1 and FBXW7. Interacts (via F-box domain) with SKP1. Interacts (via F-box domain) with pseudophosphatase STYX; the interaction is direct and prevents FBXW7 interaction with SKP1. Interacts with cyclin-E (CCNE1 or CCNE2). Interacts with PSEN1. Forms a trimeric complex with NOTCH1 and SGK1. Interacts with NOTCH1 intracellular domain/NICD and NOTCH4 intracellular domain/NICD. Interacts with NOTCH2 intracellular domain (N2ICD). Interacts with MYC (when phosphorylated). Interacts with USP28, counteracting ubiquitination of MYC. Interacts (when phosphorylated at Thr-211) with PIN1, disrupting FBXW7 dimerization and promoting FBXW7 autoubiquitination and degradation. Interacts with UBE2QL1. Interacts with FAM83D; promotes FBXW7 degradation. Interacts with MYCN; FBXW7 competes with AURKA for binding to unphosphorylated MYCN but not for binding to phosphorylated MYCN. Interacts with JUN. Found in a complex with JUN and PRR7. Interacts with JUN and PRR7; the interaction inhibits ubiquitination-mediated JUN degradation, promoting its phosphorylation and transcriptional activity. Interacts with NFE2L1. Interacts with NR1D1. Interacts with RICTOR; mediates RICTOR ubiquitination and degradation. In terms of processing, phosphorylation at Thr-211 promotes interaction with PIN1, leading to disrupt FBXW7 dimerization and promoting FBXW7 autoubiquitination and degradation. Phosphorylated by ATM at Ser-26 in response to DNA damage, promoting recruitment to DNA damage sites and 'Lys-63'-linked ubiquitination of phosphorylated XRCC4. Ubiquitinated: autoubiquitinates following phosphorylation at Thr-211 and subsequent interaction with PIN1. Ubiquitination leads to its degradation.

The protein resides in the nucleus. The protein localises to the nucleoplasm. Its subcellular location is the chromosome. The protein operates within protein modification; protein ubiquitination. Substrate recognition component of a SCF (SKP1-CUL1-F-box protein) E3 ubiquitin-protein ligase complex which mediates the ubiquitination and subsequent proteasomal degradation of target proteins. Recognizes and binds phosphorylated sites/phosphodegrons within target proteins and thereafter brings them to the SCF complex for ubiquitination. Identified substrates include cyclin-E (CCNE1 or CCNE2), JUN, MYC, NOTCH1 released notch intracellular domain (NICD), NOTCH2, MCL1, MLST8, RICTOR and probably PSEN1. Acts as a negative regulator of JNK signaling by binding to phosphorylated JUN and promoting its ubiquitination and subsequent degradation. SCF(FBXW7) complex mediates the ubiquitination and subsequent degradation of NFE2L1. Involved in bone homeostasis and negative regulation of osteoclast differentiation. Regulates the amplitude of the cyclic expression of hepatic core clock genes and genes involved in lipid and glucose metabolism via ubiquitination and proteasomal degradation of their transcriptional repressor NR1D1; CDK1-dependent phosphorylation of NR1D1 is necessary for SCF(FBXW7)-mediated ubiquitination. Also able to promote 'Lys-63'-linked ubiquitination in response to DNA damage. The SCF(FBXW7) complex facilitates double-strand break repair following phosphorylation by ATM: phosphorylation promotes localization to sites of double-strand breaks and 'Lys-63'-linked ubiquitination of phosphorylated XRCC4, enhancing DNA non-homologous end joining. This chain is F-box/WD repeat-containing protein 7, found in Rattus norvegicus (Rat).